Here is a 112-residue protein sequence, read N- to C-terminus: uncharacterized protein (112 aa).

The tract at residues 91–112 (ENQRKKGTRKRRSSEVDSKEKS) is disordered. Basic and acidic residues predominate over residues 103–112 (SSEVDSKEKS).

This is an uncharacterized protein from Caenorhabditis elegans.